A 122-amino-acid chain; its full sequence is SLIELGKMIFQETGKNPVKNYGLYLCNCGVGNRGKPVDATDRCCFVHKCCYKKVTGCDPKKDRYSYSWENKAIVCGEKNPPCLKQVCECDKAVAICLRENLQTYDKKHRVTVKFLCKAPESC.

Disulfide bonds link Cys-26/Cys-116, Cys-28/Cys-44, Cys-43/Cys-96, Cys-49/Cys-122, Cys-50/Cys-89, Cys-57/Cys-82, and Cys-75/Cys-87. The interval 106–117 (KKHRVTVKFLCK) is important for membrane-damaging activities in eukaryotes and bacteria; heparin-binding.

The protein belongs to the phospholipase A2 family. Group II subfamily. K49 sub-subfamily. In terms of assembly, homodimer; non-covalently linked. Expressed by the venom gland.

The protein resides in the secreted. Functionally, snake venom phospholipase A2 (PLA2) that has almost no phospholipase A2 activity. Is myotoxic. Displays edema-inducing activities. A model of myotoxic mechanism has been proposed: an apo Lys49-PLA2 is activated by the entrance of a hydrophobic molecule (e.g. fatty acid) at the hydrophobic channel of the protein leading to a reorientation of a monomer. This reorientation causes a transition between 'inactive' to 'active' states, causing alignment of C-terminal and membrane-docking sites (MDoS) side-by-side and putting the membrane-disruption sites (MDiS) in the same plane, exposed to solvent and in a symmetric position for both monomers. The MDoS region stabilizes the toxin on membrane by the interaction of charged residues with phospholipid head groups. Subsequently, the MDiS region destabilizes the membrane with penetration of hydrophobic residues. This insertion causes a disorganization of the membrane, allowing an uncontrolled influx of ions (i.e. calcium and sodium), and eventually triggering irreversible intracellular alterations and cell death. The protein is Basic phospholipase A2 homolog of Protobothrops mucrosquamatus (Taiwan habu).